The following is a 437-amino-acid chain: Septin-7 (437 aa).

S2 carries the post-translational modification N-acetylserine. Y30 carries the post-translational modification Phosphotyrosine. The Septin-type G domain occupies 47–316 (RGFEFTLMVV…ENYRSRKLAA (270 aa)). The interval 47-317 (RGFEFTLMVV…NYRSRKLAAV (271 aa)) is interaction with SEPTIN12. Residues 57–64 (GESGLGKS) form a G1 motif region. Residue 57–64 (GESGLGKS) coordinates GTP. S77 carries the phosphoserine modification. GTP is bound by residues T90, G116, and 195-203 (KADTLTPEE). A G3 motif region spans residues 113 to 116 (DTPG). Residues 194-197 (AKAD) are G4 motif. T228 bears the Phosphothreonine mark. GTP is bound by residues G250 and R265. Residues 332–433 (TKSPLAQMEE…SRTLEKNKKK (102 aa)) adopt a coiled-coil conformation. S334 bears the Phosphoserine mark. K373 is subject to N6-acetyllysine. Basic and acidic residues predominate over residues 378 to 410 (ELQRRHEQMKKNLEAQHKELEEKRRQFEDEKAN). The disordered stretch occupies residues 378–437 (ELQRRHEQMKKNLEAQHKELEEKRRQFEDEKANWEAQQRILEQQNSSRTLEKNKKKGKIF). Residue S424 is modified to Phosphoserine. A Phosphothreonine modification is found at T426.

It belongs to the TRAFAC class TrmE-Era-EngA-EngB-Septin-like GTPase superfamily. Septin GTPase family. As to quaternary structure, septins polymerize into heterooligomeric protein complexes that form filaments, and associate with cellular membranes, actin filaments and microtubules. GTPase activity is required for filament formation. Filaments are assembled from asymmetrical heterotrimers, composed of SEPTIN2, SEPTIN6 and SEPTIN7 that associate head-to-head to form a hexameric unit. Within the trimer, directly interacts with SEPTIN6, while interaction with SEPTIN2 seems indirect. In the absence of SEPTIN6, forms homodimers. Interacts directly with CENPE and links CENPE to septin filaments composed of SEPTIN2, SEPTIN6 and SEPTIN7. Interacts with SEPTIN5, SEPTIN8, SEPTIN9 and SEPTIN11. Component of a septin core octameric complex consisting of SEPTIN12, SEPTIN7, SEPTIN6 and SEPTIN2 or SEPTIN4 in the order 12-7-6-2-2-6-7-12 or 12-7-6-4-4-6-7-12 and located in the sperm annulus; the SEPTIN12:SEPTIN7 association is mediated by the respective GTP-binding domains.

The protein localises to the cytoplasm. Its subcellular location is the chromosome. It is found in the centromere. The protein resides in the kinetochore. It localises to the cytoskeleton. The protein localises to the spindle. Its subcellular location is the cleavage furrow. It is found in the midbody. The protein resides in the cilium axoneme. It localises to the cell projection. The protein localises to the cilium. Its subcellular location is the flagellum. Its function is as follows. Filament-forming cytoskeletal GTPase. Required for normal organization of the actin cytoskeleton. Required for normal progress through mitosis. Involved in cytokinesis. Required for normal association of CENPE with the kinetochore. Plays a role in ciliogenesis and collective cell movements. Forms a filamentous structure with SEPTIN12, SEPTIN6, SEPTIN2 and probably SEPTIN4 at the sperm annulus which is required for the structural integrity and motility of the sperm tail during postmeiotic differentiation. The chain is Septin-7 from Bos taurus (Bovine).